The chain runs to 166 residues: Glycine-rich RNA-binding protein GRP1A (166 aa).

In terms of domain architecture, RRM spans 8-86; the sequence is YRCFVGGLAW…RSITVNEAQS (79 aa). Positions 68 to 166 are disordered; it reads GMNGQDLDGR…YGGSGGGGGW (99 aa). Gly residues-rich tracts occupy residues 88 to 146 and 153 to 166; these read GSGG…YGGG and EGGG…GGGW.

Predominantly expressed in meristematic and growing tissue.

The protein localises to the nucleus. Functionally, may play a general role in circadian phenomena associated with meristematic tissue. This is Glycine-rich RNA-binding protein GRP1A from Sinapis alba (White mustard).